A 180-amino-acid chain; its full sequence is Large ribosomal subunit protein uL5 (180 aa).

The protein belongs to the universal ribosomal protein uL5 family. In terms of assembly, part of the 50S ribosomal subunit; part of the 5S rRNA/L5/L18/L25 subcomplex. Contacts the 5S rRNA and the P site tRNA. Forms a bridge to the 30S subunit in the 70S ribosome.

Its function is as follows. This is one of the proteins that bind and probably mediate the attachment of the 5S RNA into the large ribosomal subunit, where it forms part of the central protuberance. In the 70S ribosome it contacts protein S13 of the 30S subunit (bridge B1b), connecting the 2 subunits; this bridge is implicated in subunit movement. Contacts the P site tRNA; the 5S rRNA and some of its associated proteins might help stabilize positioning of ribosome-bound tRNAs. The polypeptide is Large ribosomal subunit protein uL5 (Streptococcus agalactiae serotype Ia (strain ATCC 27591 / A909 / CDC SS700)).